The primary structure comprises 268 residues: Probable 1-acyl-sn-glycerol-3-phosphate acyltransferase (268 aa).

The short motif at 92–97 (HKSNLD) is the HXXXXD motif element.

This sequence belongs to the 1-acyl-sn-glycerol-3-phosphate acyltransferase family.

The enzyme catalyses a 1-acyl-sn-glycero-3-phosphate + an acyl-CoA = a 1,2-diacyl-sn-glycero-3-phosphate + CoA. It functions in the pathway phospholipid metabolism; CDP-diacylglycerol biosynthesis; CDP-diacylglycerol from sn-glycerol 3-phosphate: step 2/3. In terms of biological role, converts lysophosphatidic acid (LPA) into phosphatidic acid by incorporating acyl moiety at the 2 position. The sequence is that of Probable 1-acyl-sn-glycerol-3-phosphate acyltransferase (plsC) from Mycoplasma genitalium (strain ATCC 33530 / DSM 19775 / NCTC 10195 / G37) (Mycoplasmoides genitalium).